Consider the following 116-residue polypeptide: MTYVVTDECVKCKYTDCVEVCPVDCFYEGEREDDFMLVINPDECIDCGVCVPDCPIGAIKPESPGLIEWVERAKDFIENKGWKNITKKKTALPDADKFKDEKDKFNKYIGSVKIAN.

4Fe-4S ferredoxin-type domains lie at 2–31 (TYVV…EGER) and 35–64 (FMLV…PESP). Residues Cys9 and Cys17 each coordinate [3Fe-4S] cluster. 4 residues coordinate [4Fe-4S] cluster: Cys21, Cys44, Cys47, and Cys50. Cys54 is a [3Fe-4S] cluster binding site.

Requires [4Fe-4S] cluster as cofactor. [3Fe-4S] cluster serves as cofactor.

In terms of biological role, ferredoxins are iron-sulfur proteins that transfer electrons in a wide variety of metabolic reactions. This chain is Ferredoxin (fdxA), found in Rickettsia conorii (strain ATCC VR-613 / Malish 7).